We begin with the raw amino-acid sequence, 145 residues long: NADH-quinone oxidoreductase subunit A (145 aa).

3 consecutive transmembrane segments (helical) span residues 14–34, 66–86, and 96–116; these read FAVFLLSALGLCVFMLTGGFL, FYLVAMFFVIFDVETLYLYAW, and VGFIEATIFILILLAGLVYLV.

The protein belongs to the complex I subunit 3 family. As to quaternary structure, NDH-1 is composed of 13 different subunits. Subunits NuoA, H, J, K, L, M, N constitute the membrane sector of the complex.

It localises to the cell inner membrane. It catalyses the reaction a quinone + NADH + 5 H(+)(in) = a quinol + NAD(+) + 4 H(+)(out). Its function is as follows. NDH-1 shuttles electrons from NADH, via FMN and iron-sulfur (Fe-S) centers, to quinones in the respiratory chain. The immediate electron acceptor for the enzyme in this species is believed to be ubiquinone. Couples the redox reaction to proton translocation (for every two electrons transferred, four hydrogen ions are translocated across the cytoplasmic membrane), and thus conserves the redox energy in a proton gradient. This is NADH-quinone oxidoreductase subunit A from Sodalis glossinidius (strain morsitans).